The following is a 121-amino-acid chain: Securin (121 aa).

Residues 1–24 are disordered; the sequence is RATEKSVKTNGPLKQKQTTFSAKK. 2 consecutive short sequence motifs (TEK-box) follow at residues 3–5 and 26–28; these read TEK. The tract at residues 93–121 is disordered; that stretch reads LGPPSPLNMPSPPWESDVLQSPSSILSTL. The short motif at 95-105 is the SH3-binding element; it reads PPSPLNMPSPP. Over residues 95-105 the composition is skewed to pro residues; the sequence is PPSPLNMPSPP. Ser-97 is modified (phosphoserine; by CDK1). The span at 110–121 shows a compositional bias: polar residues; sequence VLQSPSSILSTL.

This sequence belongs to the securin family. In terms of assembly, interacts with the caspase-like ESPL1, and prevents its protease activity probably by covering its active site. Interacts with p53/TP53 and blocks its activity probably by blocking its binding to DNA. Interacts with the Ku 70 kDa subunit of ds-DNA kinase. Interacts with PTTG1IP. Interacts with RPS10 and DNAJA1. In terms of processing, phosphorylated by CDK1 during mitosis. Phosphorylated in vitro by ds-DNA kinase. Post-translationally, ubiquitinated through 'Lys-11' linkage of ubiquitin moieties by the anaphase promoting complex (APC) at the onset of anaphase, conducting to its degradation. 'Lys-11'-linked ubiquitination is mediated by the E2 ligase UBE2C/UBCH10.

Its subcellular location is the cytoplasm. The protein localises to the nucleus. Regulatory protein, which plays a central role in chromosome stability, in the p53/TP53 pathway, and DNA repair. Probably acts by blocking the action of key proteins. During the mitosis, it blocks Separase/ESPL1 function, preventing the proteolysis of the cohesin complex and the subsequent segregation of the chromosomes. At the onset of anaphase, it is ubiquitinated, conducting to its destruction and to the liberation of ESPL1. Its function is however not limited to a blocking activity, since it is required to activate ESPL1. Negatively regulates the transcriptional activity and related apoptosis activity of p53/TP53. The negative regulation of p53/TP53 may explain the strong transforming capability of the protein when it is overexpressed. May also play a role in DNA repair via its interaction with Ku, possibly by connecting DNA damage-response pathways with sister chromatid separation. In Sus scrofa (Pig), this protein is Securin (PTTG1).